The primary structure comprises 1192 residues: Probable inactive serine/threonine-protein kinase DDB_G0280131 (1192 aa).

5 disordered regions span residues 23–90, 144–189, 201–236, 301–406, and 478–499; these read STIN…NLNE, DSSI…SQQD, VSIS…TTTA, SIPT…FKDS, and DLDD…NNNK. The span at 26–43 shows a compositional bias: low complexity; the sequence is NLNNNNSNNNNNNNNNGN. Positions 44–60 are enriched in polar residues; sequence SATKISFQEQMPNGNGN. Composition is skewed to low complexity over residues 61 to 73 and 154 to 175; these read SSTT…QQSA and SSYL…SNNN. The segment covering 201–232 has biased composition (pro residues); sequence VSISLPPPPTTEELPLPPPSTEELQLPPPPPT. The segment covering 301–324 has biased composition (low complexity); the sequence is SIPTPIVTPSTTTSTNTTTAATVN. A compositionally biased stretch (polar residues) spans 325 to 338; the sequence is KLNASKSPNGTLTT. Over residues 362–376 the composition is skewed to low complexity; the sequence is PTLSSPSPSQSAAPQ. Residues 377-391 are compositionally biased toward pro residues; sequence PAAPQPTPTSQPQPP. Composition is skewed to low complexity over residues 392–402 and 485–498; these read TTTVSTPVSPT and NKNN…NNNN. In terms of domain architecture, Protein kinase spans 521–783; that stretch reads AQPSDIIGSG…ILKILRQPLH (263 aa). Residues 527–535 and Lys549 contribute to the ATP site; that span reads IGSGNNGTT. The segment at 790-831 is disordered; the sequence is KPTQQQQQQQQQDQQQQQPEQQLTSSTSSTSTQDSLVSQEQV. Residues 791-828 are compositionally biased toward low complexity; the sequence is PTQQQQQQQQQDQQQQQPEQQLTSSTSSTSTQDSLVSQ.

The protein belongs to the protein kinase superfamily. TKL Ser/Thr protein kinase family.

In Dictyostelium discoideum (Social amoeba), this protein is Probable inactive serine/threonine-protein kinase DDB_G0280131.